We begin with the raw amino-acid sequence, 440 residues long: Xaa-Pro dipeptidase (440 aa).

Residues Asp244, Asp255, His335, Glu380, and Glu419 each coordinate Mn(2+).

Belongs to the peptidase M24B family. Bacterial-type prolidase subfamily. It depends on Mn(2+) as a cofactor.

It catalyses the reaction Xaa-L-Pro dipeptide + H2O = an L-alpha-amino acid + L-proline. Its function is as follows. Splits dipeptides with a prolyl residue in the C-terminal position. The sequence is that of Xaa-Pro dipeptidase from Shewanella loihica (strain ATCC BAA-1088 / PV-4).